The sequence spans 1189 residues: MLPGAEIEMLGGDCFEGSYEDHQIFREVFFGSDPGNTTKRCLVTGAINFECDSSKNVNSSLSSNSVVTSGYACPQGFEASASRDGSDFNTKAKRVKLSGNKHLDARDEKGSALHGFPTSDIARETIPLHLVESSNKGVSTSSYLLKHSIVKGREVYLGGIVSGKCKSLNLDKCDGKEFKAIASPVSQESFATRMISVGASTPHSEKACFPLQLNNGSKVSPNELIMSKTCLKIDPKEDPRPLLYKYVCKVLTAARWKIEKRERSAGRKHVDTFYISPEGRKFREFGSAWKALGGILLADRKLMDTGTKKWTGINDFWSDLSLTLLDIEENMKNLNLANTRALWWSALEPFVVVVFISKQVGSLRKGNKVEVARNSNPDKLKKEDTICLNLISGCPESVLTVSEGSHLVHDVDANQEIHSDLEVQTKISSQKVSSRLERQSIIGKEISGTHEQEASKGIVASKLIAEDMHESVMRKNLHRRSKKISDIKPASLDQHDSLDSNSLNSFEFQDKEMGNIHLVSKGSRDERLRNEKMNNSCCNSKKGRKKARKHYTQDDDLMGSTITRNKGKFSRSSQKKKTQKPKARTKKRNNRGGCRLLPRSSSNVENHFFQGNWSILGPRTVLSWLIATKVISRDEVIQLRDPDDDTVVKTGLVTKDGVVCTCCNKTVSLSEFKNHAGFNQNCPCLNLFMGSGKPFASCQLEAWSAEYKARRNGWRLEKASDDDPNDDSCGVCGDGGELICCDNCPSTFHQACLSMQVLPEGSWYCSSCTCWICSELVSDNAERSQDFKCSQCAHKYHGTCLQGISKRRKLFPETYFCGKNCEKVYNGLSSRVGIINPNADGLSWSILKCFQEDGMVHSARRLALKAECNSKLAVALSIMEESFLSMVDPRTGIDMIPHVLYNWGSTFARLDFDGFYTVVVEKDDVMISVASIRVHGVTIAEMPLVATCSKYRRQGMCRILVAAIEEMLMSLKVEKLVVAALPSLVETWTEGFGFKPMDDEERDALKRINLMVFPGTTLLKKTLYESTKPSTMKGVCLSKERNNPSNKEADLEPGLDKAGSPMSTQVESCDQMVPAGSDDEPSPGFPVPLGADQTEPTSETENPSRDSNANDRPNKTTVVSIGEEEEEECLQKDVSKLSEEGKETTRASSSSAALEEVSGLGLGVVNNVSDEMLLCVDEQLDSDSSQDSE.

Disordered regions lie at residues 475–498 and 523–597; these read KNLH…HDSL and SRDE…CRLL. Basic and acidic residues predominate over residues 523–532; sequence SRDERLRNEK. 2 stretches are compositionally biased toward basic residues: residues 541 to 550 and 565 to 590; these read KKGRKKARKH and NKGK…KRNN. A PHD-type 1 zinc finger spans residues 726 to 771; that stretch reads DDSCGVCGDGGELICCDNCPSTFHQACLSMQVLPEGSWYCSSCTCW. A PHD-type 2; degenerate zinc finger spans residues 767-823; sequence SCTCWICSELVSDNAERSQDFKCSQCAHKYHGTCLQGISKRRKLFPETYFCGKNCEK. The N-acetyltransferase domain maps to 879-1024; the sequence is MEESFLSMVD…GTTLLKKTLY (146 aa). The segment at 1031–1157 is disordered; it reads TMKGVCLSKE…SSSSAALEEV (127 aa). Basic and acidic residues-rich tracts occupy residues 1038 to 1050, 1102 to 1114, and 1129 to 1145; these read SKER…KEAD, NPSR…DRPN, and CLQK…KETT. Positions 1147–1157 are enriched in low complexity; it reads ASSSSAALEEV.

In terms of assembly, interacts (via N-terminus) with IDM2. Interacts with IMD3. Part of a complex made of MBD7, IDM1, IDM2 and IDM3. In terms of tissue distribution, expressed in cotyledons and hypocotyls in young seedlings.

The protein resides in the nucleus. In terms of biological role, histone H3 acetyltransferase that binds methylated DNA at chromatin sites lacking histone H3K4 di- or trimethylation and catalyzes H3K18 and H3K23 acetylation. Prevents the transcriptional silencing of transgenes and of some endogenous genes. Requires the presence of IDM2 for efficient H3K18 acetylation, but not for H3K23 acetylation. This chain is Increased DNA methylation 1, found in Arabidopsis thaliana (Mouse-ear cress).